A 266-amino-acid polypeptide reads, in one-letter code: Glutamate racemase (266 aa).

Substrate contacts are provided by residues 10–11 (DS) and 42–43 (YG). Cys73 functions as the Proton donor/acceptor in the catalytic mechanism. A substrate-binding site is contributed by 74 to 75 (NT). Cys183 functions as the Proton donor/acceptor in the catalytic mechanism. 184-185 (TH) contributes to the substrate binding site.

This sequence belongs to the aspartate/glutamate racemases family.

It carries out the reaction L-glutamate = D-glutamate. The protein operates within cell wall biogenesis; peptidoglycan biosynthesis. In terms of biological role, provides the (R)-glutamate required for cell wall biosynthesis. This chain is Glutamate racemase, found in Lactobacillus johnsonii (strain CNCM I-12250 / La1 / NCC 533).